Here is a 272-residue protein sequence, read N- to C-terminus: Single-strand selective monofunctional uracil DNA glycosylase (272 aa).

A disordered region spans residues 1–27; the sequence is MAVPQPFPSGPHLQPAGALMEPQPSPR. Substrate-binding residues include Met-86, Phe-100, and Asn-165. The tract at residues 175-189 is DNA-binding; sequence SGRNITPAELPAKQR. Residue His-241 coordinates substrate.

Belongs to the uracil-DNA glycosylase (UDG) superfamily. SMUG1 family.

The protein resides in the nucleus. Recognizes base lesions in the genome and initiates base excision DNA repair. Acts as a monofunctional DNA glycosylase specific for uracil (U) residues in DNA with a preference for single-stranded DNA substrates. The activity is greater toward mismatches (U/G) compared to matches (U/A). Excises uracil (U), 5-formyluracil (fU) and uracil derivatives bearing an oxidized group at C5 [5-hydroxyuracil (hoU) and 5-hydroxymethyluracil (hmU)] in ssDNA and dsDNA, but not analogous cytosine derivatives (5-hydroxycytosine and 5-formylcytosine), nor other oxidized bases. The activity is damage-specific and salt-dependent. The substrate preference is the following: ssDNA &gt; dsDNA (G pair) = dsDNA (A pair) at low salt concentration, and dsDNA (G pair) &gt; dsDNA (A pair) &gt; ssDNA at high salt concentration. This chain is Single-strand selective monofunctional uracil DNA glycosylase (SMUG1), found in Bos taurus (Bovine).